Reading from the N-terminus, the 178-residue chain is Cyclin-dependent kinase inhibitor 1B (178 aa).

Residues 1–11 (MSNVRVSNGSP) are compositionally biased toward polar residues. Positions 1–31 (MSNVRVSNGSPSLERMDARQAEYPKPSACRN) are disordered. Ser10 is subject to Phosphoserine; by UHMK1. Positions 51 to 91 (DMEEASQRKWNFDFQNHKPLEGKYEWQEVEKGSLPEFYYRP) are interaction with CDK2. Tyr74 carries the post-translational modification Phosphotyrosine; by SRC. Residues 87-178 (FYYRPPRPPK…RTEENVSDGS (92 aa)) are disordered. Tyr88 carries the post-translational modification Phosphotyrosine; by ABL, LYN, SRC and JAK2. Residue Tyr89 is modified to Phosphotyrosine. The span at 104-113 (QESQDVSGTR) shows a compositional bias: polar residues. Positions 126–137 (EDTHLVDQKTDT) are enriched in basic and acidic residues. The Nuclear localization signal signature appears at 153-169 (KRPATDDSSPQNKRANR). The residue at position 157 (Thr157) is a Phosphothreonine; by CaMK1, PKB/AKT1, RPS6KA1, RPS6KA3 and PIM1. Residue Thr170 is modified to Phosphothreonine.

It belongs to the CDI family. As to quaternary structure, forms a ternary complex composed of CCNE1, CDK2 and CDKN1B. Interacts directly with CCNE1; the interaction is inhibited by CDK2-dependent phosphorylation. Interacts with COPS5, subunit of the COP9 signalosome complex; the interaction leads to CDKN1B degradation. Interacts with NUP50; the interaction leads to nuclear import and degradation of phosphorylated CDKN1B. Interacts with CCND1 and SNX6. Interacts (Thr-198-phosphorylated form) with 14-3-3 proteins, binds strongly YWHAQ, weakly YWHAE and YWHAH, but not YWHAB nor YWHAZ; the interaction with YWHAQ results in translocation to the cytoplasm. Interacts with AKT1 and LYN; the interactions lead to cytoplasmic mislocation, phosphorylation of CDKN1B and inhibition of cell cycle arrest. Forms a ternary complex with CCNA2 and CDK2; CDKN1B inhibits the kinase activity of CDK2 through conformational rearrangements. Interacts (unphosphorylated form) with CDK2. Forms a complex with CDK2 and SPDYA, but does not directly interact with SPDYA. Forms a ternary complex composed of cyclin D, CDK4 and CDKN1B. Interacts (phosphorylated on Tyr-88 and Tyr-89) with CDK4; the interaction is required for cyclin D and CDK4 complex assembly, induces nuclear translocation and activates the CDK4 kinase activity. Interacts with GRB2. Interacts with PIM1. Identified in a complex with SKP1, SKP2 and CKS1B. Interacts with UHMK1; the interaction leads to cytoplasmic mislocation, phosphorylation of CDKN1B and inhibition of cell cycle arrest. Also interacts with CDK1. Dephosphorylated by PPM1H, leading to CDKN1B stability. Post-translationally, phosphorylated; phosphorylation occurs on serine, threonine and tyrosine residues. Phosphorylation on Ser-10 is the major site of phosphorylation in resting cells, takes place at the G(0)-G(1) phase and leads to protein stability. Phosphorylation on other sites is greatly enhanced by mitogens, growth factors, MYC and in certain cancer cell lines. The phosphorylated form found in the cytoplasm is inactivate. Phosphorylation on Tyr-88 has no effect on binding CDK complexes. In terms of processing, ubiquitinated; in the cytoplasm by the KPC complex (composed of RNF123/KPC1 and UBAC1/KPC2) and, in the nucleus, by SCF(SKP2). The latter requires prior phosphorylation on Thr-187. Ubiquitinated; by a TRIM21-containing SCF(SKP2)-like complex; leads to its degradation. Subject to degradation in the lysosome. Interaction with SNX6 promotes lysosomal degradation.

The protein resides in the nucleus. The protein localises to the cytoplasm. Its subcellular location is the endosome. Its function is as follows. Important regulator of cell cycle progression. Inhibits the kinase activity of CDK2 bound to cyclin A, but has little inhibitory activity on CDK2 bound to SPDYA. Involved in G1 arrest. Potent inhibitor of cyclin E- and cyclin A-CDK2 complexes. Forms a complex with cyclin type D-CDK4 complexes and is involved in the assembly, stability, and modulation of CCND1-CDK4 complex activation. Acts either as an inhibitor or an activator of cyclin type D-CDK4 complexes depending on its phosphorylation state and/or stoichometry. The sequence is that of Cyclin-dependent kinase inhibitor 1B (CDKN1B) from Neovison vison (American mink).